Consider the following 180-residue polypeptide: Large ribosomal subunit protein uL6 (180 aa).

It belongs to the universal ribosomal protein uL6 family. In terms of assembly, part of the 50S ribosomal subunit.

Its function is as follows. This protein binds to the 23S rRNA, and is important in its secondary structure. It is located near the subunit interface in the base of the L7/L12 stalk, and near the tRNA binding site of the peptidyltransferase center. This chain is Large ribosomal subunit protein uL6, found in Anaeromyxobacter dehalogenans (strain 2CP-1 / ATCC BAA-258).